Consider the following 209-residue polypeptide: uncharacterized protein (209 aa).

The first 19 residues, 1-19 (MGYFPYLAVFVCLLASGDA), serve as a signal peptide directing secretion. N-linked (GlcNAc...) asparagine glycans are attached at residues Asn-41 and Asn-109.

As to expression, component of the acid-soluble organic matrix of prismatic shell layers (at protein level).

Its subcellular location is the secreted. This is an uncharacterized protein from Haliotis asinina (Donkey's ear abalone).